The following is a 106-amino-acid chain: Iron-sulfur cluster assembly protein CyaY (106 aa).

Belongs to the frataxin family.

Functionally, involved in iron-sulfur (Fe-S) cluster assembly. May act as a regulator of Fe-S biogenesis. In Serratia proteamaculans (strain 568), this protein is Iron-sulfur cluster assembly protein CyaY.